The following is a 609-amino-acid chain: Glutamine--fructose-6-phosphate aminotransferase [isomerizing] (609 aa).

The active-site Nucleophile; for GATase activity is C2. The Glutamine amidotransferase type-2 domain maps to 2–218 (CGIVGAIAQR…EGDIAEITRR (217 aa)). SIS domains lie at 286-426 (ADEL…LKGL) and 458-599 (LAED…VDQP). K604 acts as the For Fru-6P isomerization activity in catalysis.

Homodimer.

Its subcellular location is the cytoplasm. The catalysed reaction is D-fructose 6-phosphate + L-glutamine = D-glucosamine 6-phosphate + L-glutamate. Functionally, catalyzes the first step in hexosamine metabolism, converting fructose-6P into glucosamine-6P using glutamine as a nitrogen source. The sequence is that of Glutamine--fructose-6-phosphate aminotransferase [isomerizing] from Salmonella typhimurium (strain LT2 / SGSC1412 / ATCC 700720).